Consider the following 486-residue polypeptide: MIQGTTSDAGKSTLVAGLCRLARRAGVRVAPFKPQNMALNSAVTVDGGEIGRAQALQAIAAGIAAHTDLNPVLLKPTSDRGAQVIIHGKARMNLDARAYHDYKPVAFEAVLESYARLQAAYETIFVEGAGSPAEINLRDRDIANMGFAEAVDCPVVLVADIDRGGVFAHLTGTLACLSASEQSRVRGFIINRFRGDVSLLKPGLDWLEAKTGKPVLGVVPYLHGLTLDAEDMLPPELRAAHDGGAARMLRVVVPVLPHISNHTDFDALRAHPQVDFEYVRSGTPVPPADLIILPGSKNVPGDLASLRAQGWDAVLQKHLRYGGRVIGICGGMQMLGREVADPHGVEGAPGTSAGLGWLDYSTVLTRDKTLKNVTGHLALPGSPEVAGYEIHMGETHGPALDTPALRLGDAQAAHPDGAISADGQILATYVHGLFDTPAACAALLAWAGLSDAEEIDYPALREASLERLADTLAEHLDLPKLFAAIG.

Residues 248–439 (MLRVVVPVLP…VHGLFDTPAA (192 aa)) form the GATase cobBQ-type domain. The active-site Nucleophile is Cys-329. The active site involves His-431.

It belongs to the CobB/CobQ family. CobQ subfamily.

Its pathway is cofactor biosynthesis; adenosylcobalamin biosynthesis. Catalyzes amidations at positions B, D, E, and G on adenosylcobyrinic A,C-diamide. NH(2) groups are provided by glutamine, and one molecule of ATP is hydrogenolyzed for each amidation. The chain is Cobyric acid synthase from Paraburkholderia phytofirmans (strain DSM 17436 / LMG 22146 / PsJN) (Burkholderia phytofirmans).